The sequence spans 130 residues: Small ribosomal subunit protein uS8 (130 aa).

Belongs to the universal ribosomal protein uS8 family. As to quaternary structure, part of the 30S ribosomal subunit. Contacts proteins S5 and S12.

In terms of biological role, one of the primary rRNA binding proteins, it binds directly to 16S rRNA central domain where it helps coordinate assembly of the platform of the 30S subunit. The protein is Small ribosomal subunit protein uS8 of Glaesserella parasuis serovar 5 (strain SH0165) (Haemophilus parasuis).